The chain runs to 93 residues: MSNRVSTGKMAMAPQESVQPAVLYKLVLFALLMAVVPIGTYFSTLNYLWDGSTTFAAISAIAAANLILVGYVVVAFREDAASRTGPLPEKKTS.

The Cytoplasmic segment spans residues 1–21 (MSNRVSTGKMAMAPQESVQPA). Residues 22–42 (VLYKLVLFALLMAVVPIGTYF) form a helical membrane-spanning segment. At 43 to 54 (STLNYLWDGSTT) the chain is on the lumenal side. A helical membrane pass occupies residues 55 to 75 (FAAISAIAAANLILVGYVVVA). The Cytoplasmic portion of the chain corresponds to 76–93 (FREDAASRTGPLPEKKTS). The Prevents secretion from ER motif lies at 90 to 93 (KKTS).

It belongs to the VMA21 family.

It is found in the endoplasmic reticulum membrane. The protein resides in the endoplasmic reticulum-Golgi intermediate compartment membrane. It localises to the cytoplasmic vesicle. The protein localises to the COPII-coated vesicle membrane. In terms of biological role, required for the assembly of the V0 complex of the vacuolar ATPase (V-ATPase) in the endoplasmic reticulum. This is Vacuolar ATPase assembly integral membrane protein VMA21 from Cryptococcus neoformans var. neoformans serotype D (strain JEC21 / ATCC MYA-565) (Filobasidiella neoformans).